Here is a 204-residue protein sequence, read N- to C-terminus: N-(5'-phosphoribosyl)anthranilate isomerase (204 aa).

This sequence belongs to the TrpF family.

It catalyses the reaction N-(5-phospho-beta-D-ribosyl)anthranilate = 1-(2-carboxyphenylamino)-1-deoxy-D-ribulose 5-phosphate. The protein operates within amino-acid biosynthesis; L-tryptophan biosynthesis; L-tryptophan from chorismate: step 3/5. The chain is N-(5'-phosphoribosyl)anthranilate isomerase from Pseudomonas fluorescens (strain Pf0-1).